Here is an 88-residue protein sequence, read N- to C-terminus: Co-chaperonin GroES (88 aa).

Belongs to the GroES chaperonin family. As to quaternary structure, heptamer of 7 subunits arranged in a ring. Interacts with the chaperonin GroEL.

The protein localises to the cytoplasm. In terms of biological role, together with the chaperonin GroEL, plays an essential role in assisting protein folding. The GroEL-GroES system forms a nano-cage that allows encapsulation of the non-native substrate proteins and provides a physical environment optimized to promote and accelerate protein folding. GroES binds to the apical surface of the GroEL ring, thereby capping the opening of the GroEL channel. The polypeptide is Co-chaperonin GroES (Treponema pallidum (strain Nichols)).